Consider the following 692-residue polypeptide: Elongation factor G (692 aa).

In terms of domain architecture, tr-type G spans 9 to 283 (DKLRNIGIMA…AVIDYLPSPL (275 aa)). Residues 18-25 (AHIDAGKT), 82-86 (DTPGH), and 136-139 (NKMD) contribute to the GTP site.

Belongs to the TRAFAC class translation factor GTPase superfamily. Classic translation factor GTPase family. EF-G/EF-2 subfamily.

It localises to the cytoplasm. Functionally, catalyzes the GTP-dependent ribosomal translocation step during translation elongation. During this step, the ribosome changes from the pre-translocational (PRE) to the post-translocational (POST) state as the newly formed A-site-bound peptidyl-tRNA and P-site-bound deacylated tRNA move to the P and E sites, respectively. Catalyzes the coordinated movement of the two tRNA molecules, the mRNA and conformational changes in the ribosome. In Thermotoga maritima (strain ATCC 43589 / DSM 3109 / JCM 10099 / NBRC 100826 / MSB8), this protein is Elongation factor G (fusA).